Consider the following 568-residue polypeptide: Dihydroxy-acid dehydratase (568 aa).

C59 contributes to the [2Fe-2S] cluster binding site. A Mg(2+)-binding site is contributed by D91. C132 lines the [2Fe-2S] cluster pocket. Positions 133 and 134 each coordinate Mg(2+). K134 bears the N6-carboxylysine mark. C204 contacts [2Fe-2S] cluster. E456 contributes to the Mg(2+) binding site. S482 functions as the Proton acceptor in the catalytic mechanism.

This sequence belongs to the IlvD/Edd family. Homodimer. [2Fe-2S] cluster serves as cofactor. The cofactor is Mg(2+).

The enzyme catalyses (2R)-2,3-dihydroxy-3-methylbutanoate = 3-methyl-2-oxobutanoate + H2O. It carries out the reaction (2R,3R)-2,3-dihydroxy-3-methylpentanoate = (S)-3-methyl-2-oxopentanoate + H2O. Its pathway is amino-acid biosynthesis; L-isoleucine biosynthesis; L-isoleucine from 2-oxobutanoate: step 3/4. It participates in amino-acid biosynthesis; L-valine biosynthesis; L-valine from pyruvate: step 3/4. In terms of biological role, functions in the biosynthesis of branched-chain amino acids. Catalyzes the dehydration of (2R,3R)-2,3-dihydroxy-3-methylpentanoate (2,3-dihydroxy-3-methylvalerate) into 2-oxo-3-methylpentanoate (2-oxo-3-methylvalerate) and of (2R)-2,3-dihydroxy-3-methylbutanoate (2,3-dihydroxyisovalerate) into 2-oxo-3-methylbutanoate (2-oxoisovalerate), the penultimate precursor to L-isoleucine and L-valine, respectively. This is Dihydroxy-acid dehydratase from Verminephrobacter eiseniae (strain EF01-2).